Reading from the N-terminus, the 344-residue chain is Succinylglutamate desuccinylase (344 aa).

Zn(2+) contacts are provided by H63, E66, and H160. The active site involves E224.

This sequence belongs to the AspA/AstE family. Succinylglutamate desuccinylase subfamily. It depends on Zn(2+) as a cofactor.

It carries out the reaction N-succinyl-L-glutamate + H2O = L-glutamate + succinate. The protein operates within amino-acid degradation; L-arginine degradation via AST pathway; L-glutamate and succinate from L-arginine: step 5/5. Its function is as follows. Transforms N(2)-succinylglutamate into succinate and glutamate. This chain is Succinylglutamate desuccinylase, found in Shewanella baltica (strain OS223).